A 234-amino-acid chain; its full sequence is Elongation factor Tu (234 aa).

The tr-type G domain occupies 1 to 125; the sequence is KNMITGAAQM…EVDAFIPTPE (125 aa). Residue 47 to 50 coordinates GTP; it reads NKQD.

Belongs to the TRAFAC class translation factor GTPase superfamily. Classic translation factor GTPase family. EF-Tu/EF-1A subfamily. Monomer.

It is found in the cytoplasm. It carries out the reaction GTP + H2O = GDP + phosphate + H(+). Its function is as follows. GTP hydrolase that promotes the GTP-dependent binding of aminoacyl-tRNA to the A-site of ribosomes during protein biosynthesis. In Prochlorothrix hollandica, this protein is Elongation factor Tu (tufA).